We begin with the raw amino-acid sequence, 126 residues long: Fluoride-specific ion channel FluC (126 aa).

The next 4 helical transmembrane spans lie at Phe6 to Leu26, Tyr36 to Phe56, Leu68 to Val88, and Ile99 to Leu119. Positions 76 and 79 each coordinate Na(+).

The protein belongs to the fluoride channel Fluc/FEX (TC 1.A.43) family.

The protein localises to the cell inner membrane. The enzyme catalyses fluoride(in) = fluoride(out). With respect to regulation, na(+) is not transported, but it plays an essential structural role and its presence is essential for fluoride channel function. Functionally, fluoride-specific ion channel. Important for reducing fluoride concentration in the cell, thus reducing its toxicity. This is Fluoride-specific ion channel FluC from Ralstonia nicotianae (strain ATCC BAA-1114 / GMI1000) (Ralstonia solanacearum).